The following is a 93-amino-acid chain: Putative hemolysin E-like protein (93 aa).

This sequence belongs to the hemolysin E family.

The sequence is that of Putative hemolysin E-like protein from Escherichia coli O6:H1 (strain CFT073 / ATCC 700928 / UPEC).